A 351-amino-acid polypeptide reads, in one-letter code: GTPase Obg (351 aa).

Positions 1-159 (MKFLDQAKVY…RWIWLRLKLI (159 aa)) constitute an Obg domain. Positions 160–328 (ADVGLVGLPN…LCGSAWDIVL (169 aa)) constitute an OBG-type G domain. Residues 166 to 173 (GLPNAGKS), 191 to 195 (FTTLY), 213 to 216 (DIPG), 280 to 283 (NKID), and 309 to 311 (SGV) contribute to the GTP site. Residues serine 173 and threonine 193 each contribute to the Mg(2+) site.

The protein belongs to the TRAFAC class OBG-HflX-like GTPase superfamily. OBG GTPase family. Monomer. Mg(2+) serves as cofactor.

The protein localises to the cytoplasm. Its function is as follows. An essential GTPase which binds GTP, GDP and possibly (p)ppGpp with moderate affinity, with high nucleotide exchange rates and a fairly low GTP hydrolysis rate. Plays a role in control of the cell cycle, stress response, ribosome biogenesis and in those bacteria that undergo differentiation, in morphogenesis control. The polypeptide is GTPase Obg (Maricaulis maris (strain MCS10) (Caulobacter maris)).